The sequence spans 447 residues: ATP-dependent protease ATPase subunit HslU (447 aa).

ATP is bound by residues I18, 60 to 65, D259, E325, and R397; that span reads GVGKTE.

This sequence belongs to the ClpX chaperone family. HslU subfamily. As to quaternary structure, a double ring-shaped homohexamer of HslV is capped on each side by a ring-shaped HslU homohexamer. The assembly of the HslU/HslV complex is dependent on binding of ATP.

The protein localises to the cytoplasm. ATPase subunit of a proteasome-like degradation complex; this subunit has chaperone activity. The binding of ATP and its subsequent hydrolysis by HslU are essential for unfolding of protein substrates subsequently hydrolyzed by HslV. HslU recognizes the N-terminal part of its protein substrates and unfolds these before they are guided to HslV for hydrolysis. The polypeptide is ATP-dependent protease ATPase subunit HslU (Burkholderia pseudomallei (strain 668)).